The following is an 833-amino-acid chain: 3-hydroxy-3-methylglutaryl-coenzyme A reductase (833 aa).

Helical transmembrane passes span 10-32, 91-117, 160-180, and 301-321; these read FCARHQWEVIVATLALLACAASV, YLLIIAGVFSTFASFIFTSAVASLFWS, LALLGPTATLDTLLAVLLVGV, and SADYIVIATLLCALIIKFVFF. The segment at 322 to 419 is linker; that stretch reads EEQRNWVIDM…EEVVMLVEQS (98 aa). Residues 347-374 form a disordered region; that stretch reads KPKFSVGDDSNSEVSTQTEGVLEDEWPT. Polar residues predominate over residues 354 to 365; that stretch reads DDSNSEVSTQTE. Residues 420–833 form a catalytic region; it reads HIPLHRLEAV…ENITLKVPTL (414 aa). Active-site charge relay system residues include Glu504 and Lys635. An N-linked (GlcNAc...) asparagine glycan is attached at Asn680. Asp711 acts as the Charge relay system in catalysis. 2 N-linked (GlcNAc...) asparagine glycosylation sites follow: Asn715 and Asn720. The Proton donor role is filled by His809. 2 N-linked (GlcNAc...) asparagine glycosylation sites follow: Asn813 and Asn825.

It belongs to the HMG-CoA reductase family.

It localises to the endoplasmic reticulum membrane. The enzyme catalyses (R)-mevalonate + 2 NADP(+) + CoA = (3S)-3-hydroxy-3-methylglutaryl-CoA + 2 NADPH + 2 H(+). Its pathway is metabolic intermediate biosynthesis; (R)-mevalonate biosynthesis; (R)-mevalonate from acetyl-CoA: step 3/3. The activity of HMG-CoA-reductase is suppressed by exogenous mevalonate. Functionally, synthesis of mevalonate for the production of non-sterol isoprenoids, which are essential for growth differentiation. In Agrotis ipsilon (Black cutworm moth), this protein is 3-hydroxy-3-methylglutaryl-coenzyme A reductase (HMGR).